The following is a 307-amino-acid chain: Putative ankyrin repeat protein L59 (307 aa).

9 ANK repeats span residues 41-67 (LFNK…NLEK), 68-97 (IDNK…DTTN), 98-127 (HNYS…DIRA), 129-157 (DDEA…DVRN), 158-187 (RNDF…DIRT), 188-217 (DDDY…NIHA), 219-247 (GDSA…DIRI), 248-277 (DNDY…DIGA), and 279-307 (NNYA…LKLY).

The chain is Putative ankyrin repeat protein L59 from Acanthamoeba polyphaga (Amoeba).